A 283-amino-acid chain; its full sequence is Diaminopimelate epimerase (283 aa).

Asn-13 and Asn-67 together coordinate substrate. The active-site Proton donor is Cys-76. Substrate-binding positions include 77–78 (GN), Asn-166, Asn-199, and 217–218 (ER). Residue Cys-226 is the Proton acceptor of the active site. Residue 227 to 228 (GT) coordinates substrate.

This sequence belongs to the diaminopimelate epimerase family. As to quaternary structure, homodimer.

It is found in the cytoplasm. The enzyme catalyses (2S,6S)-2,6-diaminopimelate = meso-2,6-diaminopimelate. It functions in the pathway amino-acid biosynthesis; L-lysine biosynthesis via DAP pathway; DL-2,6-diaminopimelate from LL-2,6-diaminopimelate: step 1/1. Functionally, catalyzes the stereoinversion of LL-2,6-diaminopimelate (L,L-DAP) to meso-diaminopimelate (meso-DAP), a precursor of L-lysine and an essential component of the bacterial peptidoglycan. The protein is Diaminopimelate epimerase of Desulforapulum autotrophicum (strain ATCC 43914 / DSM 3382 / VKM B-1955 / HRM2) (Desulfobacterium autotrophicum).